Here is an 84-residue protein sequence, read N- to C-terminus: Small ribosomal subunit protein eS27-like (84 aa).

The span at 1–16 (MPLARDLLHPSLDEEK) shows a compositional bias: basic and acidic residues. The interval 1 to 23 (MPLARDLLHPSLDEEKKKHKKKR) is disordered. The C4-type zinc-finger motif lies at 38–60 (PGCYKITTVFSHAQTVVLCVGCS).

Belongs to the eukaryotic ribosomal protein eS27 family. It depends on Zn(2+) as a cofactor.

This chain is Small ribosomal subunit protein eS27-like (RPS27L), found in Bos taurus (Bovine).